The primary structure comprises 633 residues: Chaperone protein HtpG (633 aa).

The tract at residues M1–R341 is a; substrate-binding. Positions E342–R562 are b. A c region spans residues L563–A633.

Belongs to the heat shock protein 90 family. In terms of assembly, homodimer.

The protein localises to the cytoplasm. In terms of biological role, molecular chaperone. Has ATPase activity. The sequence is that of Chaperone protein HtpG from Cupriavidus metallidurans (strain ATCC 43123 / DSM 2839 / NBRC 102507 / CH34) (Ralstonia metallidurans).